The chain runs to 388 residues: tRNA (guanine(26)-N(2))-dimethyltransferase (388 aa).

Residues 7–381 enclose the Trm1 methyltransferase domain; the sequence is KTVEEGLTKI…APLKKIKEII (375 aa). Arginine 40, arginine 70, aspartate 88, aspartate 115, and alanine 116 together coordinate S-adenosyl-L-methionine. The Zn(2+) site is built by cysteine 248, cysteine 251, cysteine 268, and cysteine 271.

This sequence belongs to the class I-like SAM-binding methyltransferase superfamily. Trm1 family.

The catalysed reaction is guanosine(26) in tRNA + 2 S-adenosyl-L-methionine = N(2)-dimethylguanosine(26) in tRNA + 2 S-adenosyl-L-homocysteine + 2 H(+). Its function is as follows. Dimethylates a single guanine residue at position 26 of a number of tRNAs using S-adenosyl-L-methionine as donor of the methyl groups. This Methanobrevibacter smithii (strain ATCC 35061 / DSM 861 / OCM 144 / PS) protein is tRNA (guanine(26)-N(2))-dimethyltransferase.